The sequence spans 150 residues: UPF0178 protein Bcen2424_1660 (150 aa).

Belongs to the UPF0178 family.

The sequence is that of UPF0178 protein Bcen2424_1660 from Burkholderia cenocepacia (strain HI2424).